The sequence spans 87 residues: Ribonuclease P protein component 1 (87 aa).

It belongs to the eukaryotic/archaeal RNase P protein component 1 family. In terms of assembly, consists of a catalytic RNA component and at least 4-5 protein subunits.

The protein resides in the cytoplasm. It carries out the reaction Endonucleolytic cleavage of RNA, removing 5'-extranucleotides from tRNA precursor.. Part of ribonuclease P, a protein complex that generates mature tRNA molecules by cleaving their 5'-ends. The chain is Ribonuclease P protein component 1 from Thermoplasma acidophilum (strain ATCC 25905 / DSM 1728 / JCM 9062 / NBRC 15155 / AMRC-C165).